A 690-amino-acid chain; its full sequence is uncharacterized protein (690 aa).

This is an uncharacterized protein from Acanthamoeba polyphaga (Amoeba).